A 407-amino-acid chain; its full sequence is MAREKFERSKPHVNIGTIGHVDHGKTTLTAAISATLAVYSGSKKDISLIDSAPEEKARGITINTAHVEYETETRHYAHVDCPGHADYVKNMITGAAQMDGGILVVSAADGPMPQTREHILLAKQVGVPHLVVFLNKADQVDDEELLELVELEVQELLENYDFPGDDIPFVSGSALLALQAVEGGPKAKGDDKWVDRIFDLMESVDNYIPAPERDTEKTFLMAVEDVFSITGRGTVATGRIERGILKIGDTIEIVGLKDTQTTTVTGIEMFQKTLDEGMAGDNVGILIRGVQKTDIERGMVLAQPGTISPHKKFEAEVYVLGKDEGGRHTPFFTGYRPQFYVRTIDVTGTIVQFTGDDGSAAEMVMPGDRIKMTAELINPIAIEQGMRFAIREGGRTVGAGVVSKILE.

The 203-residue stretch at 10–212 (KPHVNIGTIG…SVDNYIPAPE (203 aa)) folds into the tr-type G domain. Residues 19 to 26 (GHVDHGKT) form a G1 region. Position 19–26 (19–26 (GHVDHGKT)) interacts with GTP. Residue T26 coordinates Mg(2+). Positions 59 to 63 (GITIN) are G2. The segment at 80–83 (DCPG) is G3. Residues 80 to 84 (DCPGH) and 135 to 138 (NKAD) each bind GTP. A G4 region spans residues 135–138 (NKAD). Positions 173–175 (SAL) are G5.

Belongs to the TRAFAC class translation factor GTPase superfamily. Classic translation factor GTPase family. EF-Tu/EF-1A subfamily.

The protein resides in the plastid. Its subcellular location is the chloroplast. It catalyses the reaction GTP + H2O = GDP + phosphate + H(+). Functionally, GTP hydrolase that promotes the GTP-dependent binding of aminoacyl-tRNA to the A-site of ribosomes during protein biosynthesis. In Emiliania huxleyi (Coccolithophore), this protein is Elongation factor Tu, chloroplastic (tufA).